Reading from the N-terminus, the 221-residue chain is Octanoyltransferase (221 aa).

The BPL/LPL catalytic domain maps to 29-208 (DEIPDTCLLL…RLTEFLLPAR (180 aa)). Substrate contacts are provided by residues 67–74 (RGGRITWH), 138–140 (AIG), and 151–153 (GFA). Residue Cys169 is the Acyl-thioester intermediate of the active site.

It belongs to the LipB family.

The protein localises to the cytoplasm. It catalyses the reaction octanoyl-[ACP] + L-lysyl-[protein] = N(6)-octanoyl-L-lysyl-[protein] + holo-[ACP] + H(+). Its pathway is protein modification; protein lipoylation via endogenous pathway; protein N(6)-(lipoyl)lysine from octanoyl-[acyl-carrier-protein]: step 1/2. Catalyzes the transfer of endogenously produced octanoic acid from octanoyl-acyl-carrier-protein onto the lipoyl domains of lipoate-dependent enzymes. Lipoyl-ACP can also act as a substrate although octanoyl-ACP is likely to be the physiological substrate. The chain is Octanoyltransferase from Acidothermus cellulolyticus (strain ATCC 43068 / DSM 8971 / 11B).